We begin with the raw amino-acid sequence, 316 residues long: 4-hydroxy-3-methylbut-2-enyl diphosphate reductase (316 aa).

Cys-12 contacts [4Fe-4S] cluster. Positions 41 and 74 each coordinate (2E)-4-hydroxy-3-methylbut-2-enyl diphosphate. His-41 and His-74 together coordinate dimethylallyl diphosphate. Residues His-41 and His-74 each coordinate isopentenyl diphosphate. Cys-96 lines the [4Fe-4S] cluster pocket. His-124 is a (2E)-4-hydroxy-3-methylbut-2-enyl diphosphate binding site. His-124 serves as a coordination point for dimethylallyl diphosphate. His-124 contacts isopentenyl diphosphate. The active-site Proton donor is Glu-126. Thr-169 provides a ligand contact to (2E)-4-hydroxy-3-methylbut-2-enyl diphosphate. Residue Cys-199 participates in [4Fe-4S] cluster binding. Ser-227, Ser-228, Asn-229, and Ser-271 together coordinate (2E)-4-hydroxy-3-methylbut-2-enyl diphosphate. Residues Ser-227, Ser-228, Asn-229, and Ser-271 each coordinate dimethylallyl diphosphate. The isopentenyl diphosphate site is built by Ser-227, Ser-228, Asn-229, and Ser-271.

This sequence belongs to the IspH family. The cofactor is [4Fe-4S] cluster.

The catalysed reaction is isopentenyl diphosphate + 2 oxidized [2Fe-2S]-[ferredoxin] + H2O = (2E)-4-hydroxy-3-methylbut-2-enyl diphosphate + 2 reduced [2Fe-2S]-[ferredoxin] + 2 H(+). The enzyme catalyses dimethylallyl diphosphate + 2 oxidized [2Fe-2S]-[ferredoxin] + H2O = (2E)-4-hydroxy-3-methylbut-2-enyl diphosphate + 2 reduced [2Fe-2S]-[ferredoxin] + 2 H(+). The protein operates within isoprenoid biosynthesis; dimethylallyl diphosphate biosynthesis; dimethylallyl diphosphate from (2E)-4-hydroxy-3-methylbutenyl diphosphate: step 1/1. Its pathway is isoprenoid biosynthesis; isopentenyl diphosphate biosynthesis via DXP pathway; isopentenyl diphosphate from 1-deoxy-D-xylulose 5-phosphate: step 6/6. In terms of biological role, catalyzes the conversion of 1-hydroxy-2-methyl-2-(E)-butenyl 4-diphosphate (HMBPP) into a mixture of isopentenyl diphosphate (IPP) and dimethylallyl diphosphate (DMAPP). Acts in the terminal step of the DOXP/MEP pathway for isoprenoid precursor biosynthesis. The protein is 4-hydroxy-3-methylbut-2-enyl diphosphate reductase of Xanthomonas axonopodis pv. citri (strain 306).